We begin with the raw amino-acid sequence, 212 residues long: Regulatory protein RecX (212 aa).

This sequence belongs to the RecX family.

Its subcellular location is the cytoplasm. In terms of biological role, modulates RecA activity. This is Regulatory protein RecX from Clostridium perfringens (strain SM101 / Type A).